We begin with the raw amino-acid sequence, 326 residues long: 3-oxopimeloyl-[acyl-carrier-protein] synthase (326 aa).

Active-site residues include cysteine 115 and histidine 253. The segment at 254 to 258 (QANIR) is ACP-binding. Residue asparagine 283 is part of the active site.

This sequence belongs to the thiolase-like superfamily. BioZ family.

It carries out the reaction malonyl-[ACP] + an acyl-CoA + H(+) = a 3-oxoacyl-[ACP] + CO2 + CoA. It catalyses the reaction glutaryl-CoA + malonyl-[ACP] + H(+) = 3-oxo-6-carboxyhexanoyl-[ACP] + CO2 + CoA. The protein operates within cofactor biosynthesis; biotin biosynthesis. In terms of biological role, involved in the formation of the biotin precursor pimeloyl-ACP. Catalyzes the condensation of glutaryl-CoA, an intermediate in lysine degradation, with malonyl-ACP to produce 3-oxopimeloyl-ACP. The sequence is that of 3-oxopimeloyl-[acyl-carrier-protein] synthase from Brucella abortus (strain 2308).